A 281-amino-acid chain; its full sequence is Tryptophan synthase alpha chain (281 aa).

Active-site proton acceptor residues include Glu49 and Asp60.

It belongs to the TrpA family. In terms of assembly, tetramer of two alpha and two beta chains.

It catalyses the reaction (1S,2R)-1-C-(indol-3-yl)glycerol 3-phosphate + L-serine = D-glyceraldehyde 3-phosphate + L-tryptophan + H2O. It functions in the pathway amino-acid biosynthesis; L-tryptophan biosynthesis; L-tryptophan from chorismate: step 5/5. Functionally, the alpha subunit is responsible for the aldol cleavage of indoleglycerol phosphate to indole and glyceraldehyde 3-phosphate. The sequence is that of Tryptophan synthase alpha chain from Methanocaldococcus jannaschii (strain ATCC 43067 / DSM 2661 / JAL-1 / JCM 10045 / NBRC 100440) (Methanococcus jannaschii).